A 23-amino-acid chain; its full sequence is MRNAVSKAGIISRRRLLLFQFAG.

The polypeptide is Protein YsaE (Escherichia coli (strain K12)).